Consider the following 385-residue polypeptide: 8-amino-7-oxononanoate synthase (385 aa).

A substrate-binding site is contributed by R23. 110–111 (GF) contacts pyridoxal 5'-phosphate. H135 serves as a coordination point for substrate. Pyridoxal 5'-phosphate-binding residues include S180, H208, and T234. Position 237 is an N6-(pyridoxal phosphate)lysine (K237). T350 contributes to the substrate binding site.

It belongs to the class-II pyridoxal-phosphate-dependent aminotransferase family. BioF subfamily. Homodimer. The cofactor is pyridoxal 5'-phosphate.

The catalysed reaction is 6-carboxyhexanoyl-[ACP] + L-alanine + H(+) = (8S)-8-amino-7-oxononanoate + holo-[ACP] + CO2. Its pathway is cofactor biosynthesis; biotin biosynthesis. In terms of biological role, catalyzes the decarboxylative condensation of pimeloyl-[acyl-carrier protein] and L-alanine to produce 8-amino-7-oxononanoate (AON), [acyl-carrier protein], and carbon dioxide. This is 8-amino-7-oxononanoate synthase from Vibrio vulnificus (strain CMCP6).